The following is a 20-amino-acid chain: 44 kDa cell wall protein 2 (20 aa).

It is found in the secreted. The protein resides in the cell wall. This Solanum lycopersicum (Tomato) protein is 44 kDa cell wall protein 2.